Consider the following 104-residue polypeptide: Synaptic plasticity regulator PANTS (104 aa).

Residues 58-104 (RRSAEAQADSLPPGPEGEPRVAGAGPNAVTGILTRNQGTERPHGDTR) are disordered. Basic and acidic residues predominate over residues 95–104 (GTERPHGDTR).

The protein belongs to the UPF0545 family. Interacts with RTN4 isoform A/Nogo-A; the interaction results in enhanced RTN4-mediated inhibition of AMPA receptor clustering. Also interacts with NCAM1, RANBP2 and CCT8. In terms of processing, rapidly degraded by proteolysis following neuronal stimulation, resulting in increased AMPA receptor clustering.

It is found in the synapse. Its subcellular location is the synaptic cleft. Negatively regulates long-term potentiation and modulates adult synaptic plasticity. Stabilizes the interaction of RTN4 isoform A/Nogo-A with its receptors, inhibiting clustering of postsynaptic AMPA receptors at synaptic sites. Upon neuronal stimulation, degraded at synapses, reducing RTN4 signaling and allowing AMPA receptor clustering at individual synapses. The polypeptide is Synaptic plasticity regulator PANTS (Bos taurus (Bovine)).